Here is a 211-residue protein sequence, read N- to C-terminus: MARRGLLLILSSPSGAGKSTLSKRLTAWDPSIRFSVSATTRAPRPGEVDGRDYYFRTRDEFIAAVEAGEMLEHAEVFGNFYGSPKAPVEKALEQGHDTLFDIDWQGGQQIRNSSLGRDVVSIFVLPPSIGELDRRLRSRAQDSEEVIATRMARSKDEISHWAEYDYVLVNRDLDLAEEQLKMILSAERLRRDRQPDLMDFVRGLNGEFETR.

A Guanylate kinase-like domain is found at 5 to 185 (GLLLILSSPS…AEEQLKMILS (181 aa)). 12 to 19 (SPSGAGKS) provides a ligand contact to ATP.

This sequence belongs to the guanylate kinase family.

The protein localises to the cytoplasm. The catalysed reaction is GMP + ATP = GDP + ADP. Functionally, essential for recycling GMP and indirectly, cGMP. This Cereibacter sphaeroides (strain ATCC 17023 / DSM 158 / JCM 6121 / CCUG 31486 / LMG 2827 / NBRC 12203 / NCIMB 8253 / ATH 2.4.1.) (Rhodobacter sphaeroides) protein is Guanylate kinase.